Reading from the N-terminus, the 233-residue chain is Large ribosomal subunit protein uL3 (233 aa).

A disordered region spans residues 146-171 (GSQRASHGNSRSHRVPGSIGQAQDPG). Residue Q168 is modified to N5-methylglutamine.

It belongs to the universal ribosomal protein uL3 family. In terms of assembly, part of the 50S ribosomal subunit. Forms a cluster with proteins L14 and L19. In terms of processing, methylated by PrmB.

Functionally, one of the primary rRNA binding proteins, it binds directly near the 3'-end of the 23S rRNA, where it nucleates assembly of the 50S subunit. This Bordetella bronchiseptica (strain ATCC BAA-588 / NCTC 13252 / RB50) (Alcaligenes bronchisepticus) protein is Large ribosomal subunit protein uL3.